The chain runs to 219 residues: ATP phosphoribosyltransferase (219 aa).

Belongs to the ATP phosphoribosyltransferase family. Short subfamily. In terms of assembly, heteromultimer composed of HisG and HisZ subunits.

It is found in the cytoplasm. It carries out the reaction 1-(5-phospho-beta-D-ribosyl)-ATP + diphosphate = 5-phospho-alpha-D-ribose 1-diphosphate + ATP. It functions in the pathway amino-acid biosynthesis; L-histidine biosynthesis; L-histidine from 5-phospho-alpha-D-ribose 1-diphosphate: step 1/9. In terms of biological role, catalyzes the condensation of ATP and 5-phosphoribose 1-diphosphate to form N'-(5'-phosphoribosyl)-ATP (PR-ATP). Has a crucial role in the pathway because the rate of histidine biosynthesis seems to be controlled primarily by regulation of HisG enzymatic activity. The chain is ATP phosphoribosyltransferase from Paramagnetospirillum magneticum (strain ATCC 700264 / AMB-1) (Magnetospirillum magneticum).